Reading from the N-terminus, the 626-residue chain is Janus kinase and microtubule-interacting protein 1 (626 aa).

The interval 1–365 (MSKKGRSKGE…KIKNLTRENV (365 aa)) is mediates association with microtubules. Coiled-coil stretches lie at residues 19-254 (VQMA…REAE) and 284-413 (ERDV…DDLS). Positions 365 to 626 (VEMKEKLSAQ…ILFEPKLKFM (262 aa)) are mediates interaction with TYK2 and GABBR1. Ser382 is subject to Phosphoserine. The span at 452-461 (ETLSETSCNT) shows a compositional bias: polar residues. The interval 452 to 480 (ETLSETSCNTDRTDRAPATPEEDLDDTTT) is disordered. Thr470 bears the Phosphothreonine mark. Residues 490-604 (QLTREYQALQ…EFRVLELEVR (115 aa)) are a coiled coil.

This sequence belongs to the JAKMIP family. In terms of assembly, homodimer. Forms a complex with GABBR1 and KIF5B/kinesin-1. Interacts with JAK1 and TYK2. Post-translationally, phosphorylated.

The protein localises to the cytoplasm. Its subcellular location is the cytoskeleton. It is found in the membrane. In terms of biological role, associates with microtubules and may play a role in the microtubule-dependent transport of the GABA-B receptor. May play a role in JAK1 signaling and regulate microtubule cytoskeleton rearrangements. This is Janus kinase and microtubule-interacting protein 1 (JAKMIP1) from Bos taurus (Bovine).